Reading from the N-terminus, the 287-residue chain is Survival motor neuron protein (287 aa).

Residues 1-28 (MGGGGGGFPEPEDSVLFRRGTGESDDSD) form a disordered region. The tract at residues 9 to 40 (PEPEDSVLFRRGTGESDDSDVWDDTALIKAYD) is P1 (binding site for GEMIN2). Phosphothreonine is present on Thr21. Residues Ser24 and Ser27 each carry the phosphoserine modification. Lys47 participates in a covalent cross-link: Glycyl lysine isopeptide (Lys-Gly) (interchain with G-Cter in SUMO2). Disordered stretches follow at residues 51–86 (KNGDISEASEKPKGTPKRKSAKNKSQRKNTTSPSKQ) and 149–221 (NAQE…PPPH). Basic residues predominate over residues 64 to 77 (GTPKRKSAKNKSQR). Position 65 is a phosphothreonine (Thr65). Thr80 bears the Phosphothreonine; by PKA mark. One can recognise a Tudor domain in the interval 86 to 146 (QWKVGDNCCA…LSPTSEVANI (61 aa)). Residues 92–204 (NCCAIWSEDG…MPRSGLGPGK (113 aa)) are required for interaction with RPP20/POP7. Over residues 149–160 (NAQENENESQIS) the composition is skewed to low complexity. Positions 167–179 (SSRSPLNKPNNIR) are enriched in polar residues. Residue Lys204 forms a Glycyl lysine isopeptide (Lys-Gly) (interchain with G-Cter in SUMO2) linkage. A compositionally biased stretch (pro residues) spans 211 to 221 (GPPPPPPPPPH). Residues 234-261 (PPMIPPPPPICPDSLDDADALGSMLISW) form a P2 (binding site for SM B) region. The segment at 273–287 (GFKQSQKEGRYSHFN) is required for interaction with SYNCRIP.

This sequence belongs to the SMN family. Homooligomer; may form higher order homooligomers in the dimer to octamer range. Part of the core SMN complex that contains SMN1, GEMIN2/SIP1, DDX20/GEMIN3, GEMIN4, GEMIN5, GEMIN6, GEMIN7, GEMIN8 and STRAP/UNRIP. Part of the SMN-Sm complex that contains SMN1, GEMIN2/SIP1, DDX20/GEMIN3, GEMIN4, GEMIN5, GEMIN6, GEMIN7, GEMIN8, STRAP/UNRIP and the Sm proteins SNRPB, SNRPD1, SNRPD2, SNRPD3, SNRPE, SNRPF and SNRPG. Component of an import snRNP complex composed of KPNB1, RNUT1, SMN1 and ZNF259. Interacts with DDX20, FBL, NOLA1, RNUT1, SYNCRIP and with several spliceosomal snRNP core Sm proteins, including SNRPB, SNRPD1, SNRPD2, SNRPD3, SNRPE and ILF3. Interacts with GEMIN2; the interaction is direct. Interacts with GEMIN3; the interaction is direct. Interacts with GEMIN8; the interaction is direct. Interacts with SNRPB; the interaction is direct. Interacts (via Tudor domain) with SNRPD1 (via C-terminus); the interaction is direct. Interacts with SNRPD2; the interaction is direct. Interacts (via Tudor domain) with SNRPD3 (via C-terminus); the interaction is direct. Interacts with SNRPE; the interaction is direct. Interacts with OSTF1, LSM10, LSM11 and RPP20/POP7. Interacts (via C-terminal region) with ZPR1 (via C-terminal region). Interacts (via Tudor domain) with COIL. Interacts with SETX; recruits SETX to POLR2A. Interacts with POLR2A (via the C-terminal domain (CTD)). Interacts with PRMT5. Interacts with XRN2. Interacts (via C-terminus) with FMR1 (via C-terminus); the interaction is direct and occurs in a RNA-independent manner. Interacts (via Tudor domain) with SF3B2 ('Arg-508'-methylated form). Interacts with WRAP53/TCAB1. Interacts (via Tudor domain) with ELAVL4 in an RNA-independent manner; the interaction is required for localization of ELAVL4 to RNA granules. Interacts with FRG1.

It localises to the nucleus. Its subcellular location is the gem. It is found in the cajal body. The protein resides in the cytoplasm. The protein localises to the cytoplasmic granule. It localises to the perikaryon. Its subcellular location is the cell projection. It is found in the neuron projection. The protein resides in the axon. The protein localises to the myofibril. It localises to the sarcomere. Its subcellular location is the z line. In terms of biological role, the SMN complex catalyzes the assembly of small nuclear ribonucleoproteins (snRNPs), the building blocks of the spliceosome, and thereby plays an important role in the splicing of cellular pre-mRNAs. Most spliceosomal snRNPs contain a common set of Sm proteins SNRPB, SNRPD1, SNRPD2, SNRPD3, SNRPE, SNRPF and SNRPG that assemble in a heptameric protein ring on the Sm site of the small nuclear RNA to form the core snRNP (Sm core). In the cytosol, the Sm proteins SNRPD1, SNRPD2, SNRPE, SNRPF and SNRPG are trapped in an inactive 6S pICln-Sm complex by the chaperone CLNS1A that controls the assembly of the core snRNP. To assemble core snRNPs, the SMN complex accepts the trapped 5Sm proteins from CLNS1A forming an intermediate. Binding of snRNA inside 5Sm ultimately triggers eviction of the SMN complex, thereby allowing binding of SNRPD3 and SNRPB to complete assembly of the core snRNP. Within the SMN complex, SMN1 acts as a structural backbone and together with GEMIN2 it gathers the Sm complex subunits. Ensures the correct splicing of U12 intron-containing genes that may be important for normal motor and proprioceptive neurons development. Also required for resolving RNA-DNA hybrids created by RNA polymerase II, that form R-loop in transcription terminal regions, an important step in proper transcription termination. May also play a role in the metabolism of small nucleolar ribonucleoprotein (snoRNPs). This chain is Survival motor neuron protein (SMN1), found in Bos taurus (Bovine).